Reading from the N-terminus, the 513-residue chain is MQLNSTEISDLIKQRIEQFEVVSESRNEGTIVAVSDGIIRIHGLADVMQGEMIELPGNRFAIALNLERDSVGAVVMGPYADLAEGVKVKTTGRILEVPVGRGLLGRVVNTLGEPIDGKGPIDNDGYSPIEVIAPGVIERQSVDQPVQTGYKAVDAMIPIGRGQRELIIGDRQTGKTAMAIDAIINQKNSGIKCVYVAIGQKASTIANVVRKLEEHGALANTIVVVATASEAAALQYLAPYSGCSMGEYFRDRGEDSLIVYDDLSKQAVAYRQISLLLKRPPGREAYPGDVFYLHSRLLERASRVNAIYVEKFTKGAVTGKTGSLTALPIIETQAGDVSAFVPTNVISITDGQIFLETDLFNSGLRPAVNPGISVSRVGGAAQTKIIKKLSGGIRTALAQYRELAAFSQFASDLDDATRAQLEHGVRVTELMKQKQYAPMSVAAQAVSIFSAEKGYLKSVELNKVGNFEAALLSFMNSEHAPLMKLINDTGDYSADIEAELKAGLDKFVATQTW.

169-176 contributes to the ATP binding site; that stretch reads GDRQTGKT.

This sequence belongs to the ATPase alpha/beta chains family. As to quaternary structure, F-type ATPases have 2 components, CF(1) - the catalytic core - and CF(0) - the membrane proton channel. CF(1) has five subunits: alpha(3), beta(3), gamma(1), delta(1), epsilon(1). CF(0) has three main subunits: a(1), b(2) and c(9-12). The alpha and beta chains form an alternating ring which encloses part of the gamma chain. CF(1) is attached to CF(0) by a central stalk formed by the gamma and epsilon chains, while a peripheral stalk is formed by the delta and b chains.

It is found in the cell inner membrane. It catalyses the reaction ATP + H2O + 4 H(+)(in) = ADP + phosphate + 5 H(+)(out). Its function is as follows. Produces ATP from ADP in the presence of a proton gradient across the membrane. The alpha chain is a regulatory subunit. The polypeptide is ATP synthase subunit alpha (Shewanella baltica (strain OS223)).